The chain runs to 249 residues: MTERDTTHFGYKQVPVTEKESHVAKVFDSVAAKYDLMNDLMSMGIHRLWKRFTIDKSGVRAGASVLDIAGGTGDLTKKFSRLVGPSGKVVLADINASMLQVGRNQLLDHGYGDNIEFVQANAEALPFPDNSFDCVSIAFGLRNVTDKDQALREMQRVLRPGGRLLVLEFSKPTNPIVSKAYDVYSFSALPLMGSLVAQDSESYRYLAESIRMHPDQETLKSMMEQAGLCLCKYYNLTSGVVALHTGVKA.

S-adenosyl-L-methionine-binding positions include threonine 72, aspartate 93, and 121 to 122 (NA).

It belongs to the class I-like SAM-binding methyltransferase superfamily. MenG/UbiE family.

The catalysed reaction is a 2-demethylmenaquinol + S-adenosyl-L-methionine = a menaquinol + S-adenosyl-L-homocysteine + H(+). The enzyme catalyses a 2-methoxy-6-(all-trans-polyprenyl)benzene-1,4-diol + S-adenosyl-L-methionine = a 5-methoxy-2-methyl-3-(all-trans-polyprenyl)benzene-1,4-diol + S-adenosyl-L-homocysteine + H(+). Its pathway is quinol/quinone metabolism; menaquinone biosynthesis; menaquinol from 1,4-dihydroxy-2-naphthoate: step 2/2. It functions in the pathway cofactor biosynthesis; ubiquinone biosynthesis. Methyltransferase required for the conversion of demethylmenaquinol (DMKH2) to menaquinol (MKH2) and the conversion of 2-polyprenyl-6-methoxy-1,4-benzoquinol (DDMQH2) to 2-polyprenyl-3-methyl-6-methoxy-1,4-benzoquinol (DMQH2). In Hahella chejuensis (strain KCTC 2396), this protein is Ubiquinone/menaquinone biosynthesis C-methyltransferase UbiE.